Consider the following 229-residue polypeptide: Demethylmenaquinone methyltransferase (229 aa).

S-adenosyl-L-methionine-binding positions include threonine 57, aspartate 77, and 101–102 (DV).

Belongs to the class I-like SAM-binding methyltransferase superfamily. MenG/UbiE family.

It catalyses the reaction a 2-demethylmenaquinol + S-adenosyl-L-methionine = a menaquinol + S-adenosyl-L-homocysteine + H(+). It participates in quinol/quinone metabolism; menaquinone biosynthesis; menaquinol from 1,4-dihydroxy-2-naphthoate: step 2/2. Methyltransferase required for the conversion of demethylmenaquinol (DMKH2) to menaquinol (MKH2). The sequence is that of Demethylmenaquinone methyltransferase from Chlamydia trachomatis serovar L2 (strain ATCC VR-902B / DSM 19102 / 434/Bu).